The chain runs to 610 residues: UvrABC system protein C (610 aa).

Residues 16-94 form the GIY-YIG domain; it reads SQPGVYRMYD…IKLYQPRYNV (79 aa). A UVR domain is found at 204-239; it reads DQVINQLVSRMEQASQNLAFEEAARLRDQIQAVRRV.

The protein belongs to the UvrC family. Interacts with UvrB in an incision complex.

The protein resides in the cytoplasm. In terms of biological role, the UvrABC repair system catalyzes the recognition and processing of DNA lesions. UvrC both incises the 5' and 3' sides of the lesion. The N-terminal half is responsible for the 3' incision and the C-terminal half is responsible for the 5' incision. The polypeptide is UvrABC system protein C (Cronobacter sakazakii (strain ATCC BAA-894) (Enterobacter sakazakii)).